The primary structure comprises 172 residues: Translocon-associated protein subunit delta (172 aa).

Residues Met-1 to Glu-23 form the signal peptide. Topologically, residues Ala-24–Gly-143 are lumenal. Cys-25 and Cys-56 form a disulfide bridge. Lys-72 participates in a covalent cross-link: Glycyl lysine isopeptide (Lys-Gly) (interchain with G-Cter in ubiquitin). The helical transmembrane segment at Pro-144–Phe-164 threads the bilayer. The Cytoplasmic segment spans residues Ser-165 to Ala-172.

This sequence belongs to the TRAP-delta family. Heterotetramer of TRAP-alpha, TRAP-beta, TRAP-delta and TRAP-gamma.

The protein localises to the endoplasmic reticulum membrane. TRAP proteins are part of a complex whose function is to bind calcium to the ER membrane and thereby regulate the retention of ER resident proteins. The sequence is that of Translocon-associated protein subunit delta (Ssr4) from Mus musculus (Mouse).